A 296-amino-acid chain; its full sequence is Protein RarD (296 aa).

Residues 1 to 11 (MDAKQTRQGVL) lie on the Cytoplasmic side of the membrane. Residues 12–34 (LALAAYFIWGIAPAYFKLIYYVP) traverse the membrane as a helical segment. One can recognise an EamA domain in the interval 18–145 (FIWGIAPAYF…AICGVLVQLW (128 aa)). At 35–37 (ADE) the chain is on the periplasmic side. A helical transmembrane segment spans residues 38–60 (ILTHRVIWSFFFMVVLMSICRQW). Over 61-72 (SYLKTLIQTPQK) the chain is Cytoplasmic. The helical transmembrane segment at 73-95 (IFMLAVSAVLIGGNWLLFIWAVN) threads the bilayer. Residues 96-99 (NHHM) lie on the Periplasmic side of the membrane. The helical transmembrane segment at 100–122 (LEASLGYFINPLVNIVLGMIFLG) threads the bilayer. Residues 123–128 (ERFRRM) are Cytoplasmic-facing. Residues 129–146 (QWLAVILAICGVLVQLWT) traverse the membrane as a helical segment. The Periplasmic portion of the chain corresponds to 147–149 (FGS). A helical transmembrane segment spans residues 150–167 (LPIIALGLAFSFAFYGLV). Over 168-179 (RKKIAVEAQTGM) the chain is Cytoplasmic. The helical transmembrane segment at 180–197 (LIETMWLLPVAAIYLFAI) threads the bilayer. Over 198-211 (ADSSTSHMGQNPMS) the chain is Periplasmic. A helical membrane pass occupies residues 212 to 234 (LNLLLIAAGIVTTVPLLCFTAAA). Topologically, residues 235–238 (TRLR) are cytoplasmic. The chain crosses the membrane as a helical span at residues 239-261 (LSTLGFFQYIGPTLMFLLAVTFY). Residues 262–270 (GEKPGADKM) are Periplasmic-facing. A helical membrane pass occupies residues 271 to 290 (VTFAFIWVALAIFVMDAIYT). Residues 291–296 (QRRTSK) are Cytoplasmic-facing.

This sequence belongs to the EamA transporter family.

The protein localises to the cell inner membrane. The protein is Protein RarD (rarD) of Escherichia coli (strain K12).